The following is a 1150-amino-acid chain: Serine/threonine-protein phosphatase 2A regulatory subunit B'' subunit alpha (1150 aa).

The segment at 661-693 (PEVIKIQNKPEKKPGTPLPPPATSPSSPRPLSP) is disordered. Over residues 676–693 (TPLPPPATSPSSPRPLSP) the composition is skewed to pro residues. EF-hand domains are found at residues 758 to 793 (CPLY…LLNN) and 972 to 1007 (RNPT…QCER). Ca(2+) contacts are provided by Asp-985, Asp-987, Asp-989, and Glu-996. A disordered region spans residues 1105 to 1132 (AQFQEGFEDYETDEPASPSEFGNKSNKI).

PP2A consists of a common heterodimeric core enzyme, composed of a 36 kDa catalytic subunit (subunit C) and a 65 kDa constant regulatory subunit (PR65 or subunit A), that associates with a variety of regulatory subunits. Proteins that associate with the core dimer include three families of regulatory subunits B (the R2/B/PR55/B55, R3/B''/PR72/PR130/PR59 and R5/B'/B56 families), the 48 kDa variable regulatory subunit, viral proteins, and cell signaling molecules. As to expression, expressed in heart, brain, placenta, lung, muscle and kidney.

Functionally, the B regulatory subunit might modulate substrate selectivity and catalytic activity, and might also direct the localization of the catalytic enzyme to a particular subcellular compartment. This is Serine/threonine-protein phosphatase 2A regulatory subunit B'' subunit alpha (PPP2R3A) from Homo sapiens (Human).